A 395-amino-acid polypeptide reads, in one-letter code: uncharacterized protein (395 aa).

The stretch at 182 to 238 (KKLEDILSTIAEIEDSIELEKILSLDQFLKSKLSNIKITNNQIDEAKAEFKEMFNKK) forms a coiled coil.

This is an uncharacterized protein from Acanthamoeba polyphaga (Amoeba).